Consider the following 780-residue polypeptide: Pentatricopeptide repeat-containing protein At1g79540 (780 aa).

17 PPR repeats span residues 91 to 125 (SRES…GVSV), 126 to 160 (DSYC…DCRP), 161 to 196 (DVFT…NCSP), 197 to 231 (NLYT…GISP), 232 to 266 (NRVT…GNYP), 267 to 301 (DSVA…GFVL), 302 to 336 (GLRG…NIKP), 337 to 371 (DIIL…GISP), 372 to 406 (DTYC…ESFP), 407 to 441 (DACT…GCSP), 442 to 476 (SVAT…RPAS), 481 to 515 (LSHS…GSSP), 516 to 550 (DIVS…GLSP), 551 to 585 (DSVT…RHSP), 653 to 687 (TLGP…KILV), 688 to 722 (TPPS…NFKL), and 723 to 758 (MPRV…GYNV).

Belongs to the PPR family. P subfamily.

This is Pentatricopeptide repeat-containing protein At1g79540 from Arabidopsis thaliana (Mouse-ear cress).